Consider the following 296-residue polypeptide: Ribosomal RNA small subunit methyltransferase A (296 aa).

6 residues coordinate S-adenosyl-L-methionine: Asn-32, Leu-34, Gly-59, Glu-80, Asp-105, and Asn-130.

This sequence belongs to the class I-like SAM-binding methyltransferase superfamily. rRNA adenine N(6)-methyltransferase family. RsmA subfamily.

Its subcellular location is the cytoplasm. It carries out the reaction adenosine(1518)/adenosine(1519) in 16S rRNA + 4 S-adenosyl-L-methionine = N(6)-dimethyladenosine(1518)/N(6)-dimethyladenosine(1519) in 16S rRNA + 4 S-adenosyl-L-homocysteine + 4 H(+). Its function is as follows. Specifically dimethylates two adjacent adenosines (A1518 and A1519) in the loop of a conserved hairpin near the 3'-end of 16S rRNA in the 30S particle. May play a critical role in biogenesis of 30S subunits. This is Ribosomal RNA small subunit methyltransferase A from Levilactobacillus brevis (strain ATCC 367 / BCRC 12310 / CIP 105137 / JCM 1170 / LMG 11437 / NCIMB 947 / NCTC 947) (Lactobacillus brevis).